Here is a 64-residue protein sequence, read N- to C-terminus: Putative neurotoxin 4 (64 aa).

The N-terminal stretch at 1–18 (MKSKFAVLFFTLFLLALA) is a signal peptide.

The protein belongs to the scolopendra neurotoxin 6 family. In terms of processing, contains 3 disulfide bonds. Expressed by the venom gland.

The protein localises to the secreted. This chain is Putative neurotoxin 4, found in Scolopendra mutilans (Chinese red-headed centipede).